Here is a 530-residue protein sequence, read N- to C-terminus: UPF0422 protein lpg2959 (530 aa).

Residues 1 to 19 (MKFKKIILALACLSSPLYA) form the signal peptide. Residues 20–66 (DQDQQLKSEIQRLQHQAEDLQAQLNRLQKQLANHKSSQQKHEQQAAA) are a coiled coil. Residues 50-81 (LANHKSSQQKHEQQAAAKPAEPQSKPTVKSGA) are disordered. The segment covering 63-75 (QAAAKPAEPQSKP) has biased composition (low complexity).

The protein belongs to the UPF0422 family.

The chain is UPF0422 protein lpg2959 from Legionella pneumophila subsp. pneumophila (strain Philadelphia 1 / ATCC 33152 / DSM 7513).